Here is a 553-residue protein sequence, read N- to C-terminus: Formate--tetrahydrofolate ligase (553 aa).

Residue 63–70 (TPAGEGKT) coordinates ATP.

This sequence belongs to the formate--tetrahydrofolate ligase family.

The enzyme catalyses (6S)-5,6,7,8-tetrahydrofolate + formate + ATP = (6R)-10-formyltetrahydrofolate + ADP + phosphate. It functions in the pathway one-carbon metabolism; tetrahydrofolate interconversion. This chain is Formate--tetrahydrofolate ligase, found in Oenococcus oeni (strain ATCC BAA-331 / PSU-1).